Reading from the N-terminus, the 645-residue chain is 1,4-alpha-glucan branching enzyme GlgB (645 aa).

Asp-309 serves as the catalytic Nucleophile. The active-site Proton donor is Glu-352. Positions 619 to 645 (VKTRKGSKKQDGSKTKVRSNVTSRGKR) are disordered. Residues 636–645 (RSNVTSRGKR) are compositionally biased toward polar residues.

The protein belongs to the glycosyl hydrolase 13 family. GlgB subfamily. As to quaternary structure, monomer.

The enzyme catalyses Transfers a segment of a (1-&gt;4)-alpha-D-glucan chain to a primary hydroxy group in a similar glucan chain.. It functions in the pathway glycan biosynthesis; glycogen biosynthesis. Catalyzes the formation of the alpha-1,6-glucosidic linkages in glycogen by scission of a 1,4-alpha-linked oligosaccharide from growing alpha-1,4-glucan chains and the subsequent attachment of the oligosaccharide to the alpha-1,6 position. In Bacillus mycoides (strain KBAB4) (Bacillus weihenstephanensis), this protein is 1,4-alpha-glucan branching enzyme GlgB.